A 311-amino-acid chain; its full sequence is p-hydroxybenzoic acid efflux pump subunit AaeA (311 aa).

Residues 11-31 (VGITVLVVVLAVIAIFNVWAF) traverse the membrane as a helical segment.

It belongs to the membrane fusion protein (MFP) (TC 8.A.1) family.

Its subcellular location is the cell inner membrane. In terms of biological role, forms an efflux pump with AaeB. The chain is p-hydroxybenzoic acid efflux pump subunit AaeA from Yersinia pseudotuberculosis serotype O:1b (strain IP 31758).